Here is a 273-residue protein sequence, read N- to C-terminus: Ethanolamine ammonia-lyase small subunit (273 aa).

Val-164, Glu-185, and Cys-214 together coordinate adenosylcob(III)alamin.

The protein belongs to the EutC family. In terms of assembly, the basic unit is a heterodimer which dimerizes to form tetramers. The heterotetramers trimerize; 6 large subunits form a core ring with 6 small subunits projecting outwards. Requires adenosylcob(III)alamin as cofactor.

It localises to the bacterial microcompartment. It catalyses the reaction ethanolamine = acetaldehyde + NH4(+). It functions in the pathway amine and polyamine degradation; ethanolamine degradation. In terms of biological role, catalyzes the deamination of various vicinal amino-alcohols to oxo compounds. Allows this organism to utilize ethanolamine as the sole source of nitrogen and carbon in the presence of external vitamin B12. In Pseudomonas aeruginosa (strain LESB58), this protein is Ethanolamine ammonia-lyase small subunit.